The sequence spans 392 residues: Formate-dependent phosphoribosylglycinamide formyltransferase (392 aa).

Residues glutamate 22 to leucine 23 and glutamate 82 contribute to the N(1)-(5-phospho-beta-D-ribosyl)glycinamide site. ATP contacts are provided by residues arginine 114, lysine 155, serine 160 to glutamine 165, glutamate 195 to valine 198, and glutamate 203. Residues arginine 119–leucine 308 enclose the ATP-grasp domain. Positions 267 and 279 each coordinate Mg(2+). N(1)-(5-phospho-beta-D-ribosyl)glycinamide contacts are provided by residues aspartate 286, lysine 355, and arginine 362–arginine 363.

The protein belongs to the PurK/PurT family. As to quaternary structure, homodimer.

The catalysed reaction is N(1)-(5-phospho-beta-D-ribosyl)glycinamide + formate + ATP = N(2)-formyl-N(1)-(5-phospho-beta-D-ribosyl)glycinamide + ADP + phosphate + H(+). It functions in the pathway purine metabolism; IMP biosynthesis via de novo pathway; N(2)-formyl-N(1)-(5-phospho-D-ribosyl)glycinamide from N(1)-(5-phospho-D-ribosyl)glycinamide (formate route): step 1/1. Involved in the de novo purine biosynthesis. Catalyzes the transfer of formate to 5-phospho-ribosyl-glycinamide (GAR), producing 5-phospho-ribosyl-N-formylglycinamide (FGAR). Formate is provided by PurU via hydrolysis of 10-formyl-tetrahydrofolate. In Salmonella paratyphi B (strain ATCC BAA-1250 / SPB7), this protein is Formate-dependent phosphoribosylglycinamide formyltransferase.